We begin with the raw amino-acid sequence, 201 residues long: Imidazoleglycerol-phosphate dehydratase (201 aa).

The protein belongs to the imidazoleglycerol-phosphate dehydratase family.

The protein localises to the cytoplasm. It carries out the reaction D-erythro-1-(imidazol-4-yl)glycerol 3-phosphate = 3-(imidazol-4-yl)-2-oxopropyl phosphate + H2O. It functions in the pathway amino-acid biosynthesis; L-histidine biosynthesis; L-histidine from 5-phospho-alpha-D-ribose 1-diphosphate: step 6/9. The protein is Imidazoleglycerol-phosphate dehydratase of Prochlorococcus marinus subsp. pastoris (strain CCMP1986 / NIES-2087 / MED4).